Here is a 715-residue protein sequence, read N- to C-terminus: Fatty acid oxidation complex subunit alpha (715 aa).

Residues 1–190 (MTTTSAFMLN…KAGLVDDVVP (190 aa)) form an enoyl-CoA hydratase region. The segment at 306–715 (GPLNSVGILG…WTNGETDQGN (410 aa)) is 3-hydroxyacyl-CoA dehydrogenase.

It in the N-terminal section; belongs to the enoyl-CoA hydratase/isomerase family. The protein in the central section; belongs to the 3-hydroxyacyl-CoA dehydrogenase family. In terms of assembly, heterotetramer of two alpha chains (FadJ) and two beta chains (FadI).

It is found in the cytoplasm. The enzyme catalyses a (3S)-3-hydroxyacyl-CoA = a (2E)-enoyl-CoA + H2O. The catalysed reaction is a 4-saturated-(3S)-3-hydroxyacyl-CoA = a (3E)-enoyl-CoA + H2O. It carries out the reaction a (3S)-3-hydroxyacyl-CoA + NAD(+) = a 3-oxoacyl-CoA + NADH + H(+). It catalyses the reaction (3S)-3-hydroxybutanoyl-CoA = (3R)-3-hydroxybutanoyl-CoA. It functions in the pathway lipid metabolism; fatty acid beta-oxidation. Catalyzes the formation of a hydroxyacyl-CoA by addition of water on enoyl-CoA. Also exhibits 3-hydroxyacyl-CoA epimerase and 3-hydroxyacyl-CoA dehydrogenase activities. The polypeptide is Fatty acid oxidation complex subunit alpha (Salmonella gallinarum (strain 287/91 / NCTC 13346)).